Consider the following 210-residue polypeptide: Na(+)-translocating NADH-quinone reductase subunit D (210 aa).

The next 6 membrane-spanning stretches (helical) occupy residues 42-62 (VVMTVAVLFVTAFSNFFISTI), 66-86 (IPNSVRIIVQMAIIASLVIVV), 103-123 (VYVGLIITNCIVMGRAEAFAM), 131-151 (FMDGVGNGLGYGVILILVGAF), 154-174 (LFGSGSLYGFVILPLTSNGGW), and 178-198 (NGLLLLAPSAFFIVGGIIWAV).

This sequence belongs to the NqrDE/RnfAE family. Composed of six subunits; NqrA, NqrB, NqrC, NqrD, NqrE and NqrF.

Its subcellular location is the cell inner membrane. The catalysed reaction is a ubiquinone + n Na(+)(in) + NADH + H(+) = a ubiquinol + n Na(+)(out) + NAD(+). NQR complex catalyzes the reduction of ubiquinone-1 to ubiquinol by two successive reactions, coupled with the transport of Na(+) ions from the cytoplasm to the periplasm. NqrA to NqrE are probably involved in the second step, the conversion of ubisemiquinone to ubiquinol. This chain is Na(+)-translocating NADH-quinone reductase subunit D, found in Psychromonas ingrahamii (strain DSM 17664 / CCUG 51855 / 37).